The sequence spans 714 residues: Angiogenic factor with G patch and FHA domains 1 (714 aa).

Residues 1–18 (MASEAPSPPRSPPPPTSP) show a composition bias toward pro residues. Disordered regions lie at residues 1-22 (MASE…EPEL), 259-307 (QPYP…HTSC), and 322-384 (IGIH…SYDE). At Ala-2 the chain carries N-acetylalanine. Phosphoserine is present on residues Ser-7 and Ser-11. Positions 18–88 (PEPELAQLRR…QRGRNEDNKK (71 aa)) form a coiled coil. The span at 279-298 (KDPDSSATNEEKDLNSEDQK) shows a compositional bias: basic and acidic residues. Residues 335–355 (VPTSGNTIESPLHENISNSTS) show a composition bias toward polar residues. Residue Ser-344 is modified to Phosphoserine. Positions 364-383 (TDSEPEEGEITDSQTEDSYD) are enriched in acidic residues. The FHA domain occupies 434–487 (ATIGREKDMEHTLRIPEVGVSKFHAEIYFDHDLQSYVLVDQGSQNGTIVNGKQI). Basic and acidic residues predominate over residues 586 to 609 (KYKDRAGKRREQVGSEGTFQRDDA). Disordered stretches follow at residues 586 to 617 (KYKD…HSEI) and 655 to 714 (RTHA…GTLE). In terms of domain architecture, G-patch spans 619-665 (DSNKGRKMLEKMGWKKGEGLGKDGGGMKTPIQLQLRRTHAGLGTGKP). N6-acetyllysine is present on Lys-664. A compositionally biased stretch (basic and acidic residues) spans 680-690 (KNWDKARERFT).

Interacts with the secreted angiogenic factor TNFSF12. Widely expressed. Expressed in endothelial cells, vascular smooth muscle cells and osteoblasts. Expressed in umbilical vein endothelial cells and microvascular endothelial cells.

The protein localises to the cytoplasm. It is found in the secreted. Its function is as follows. Promotes angiogenesis and the proliferation of endothelial cells. Able to bind to endothelial cells and promote cell proliferation, suggesting that it may act in an autocrine fashion. The chain is Angiogenic factor with G patch and FHA domains 1 (AGGF1) from Homo sapiens (Human).